The primary structure comprises 154 residues: Snaclec salmorin subunit A (154 aa).

Positions 1 to 23 (MGRFIFVSFGLLVVFLSLSGTGA) are cleaved as a signal peptide. Intrachain disulfides connect C27/C38, C55/C152, and C127/C144. One can recognise a C-type lectin domain in the interval 34–153 (NNGHCYQAFN…CGQRNPFVCE (120 aa)). The Ca(2+) site is built by S66, E68, and E72. E153 is a Ca(2+) binding site.

This sequence belongs to the snaclec family. As to quaternary structure, heterodimer of subunits A and B; disulfide-linked. As to expression, expressed by the venom gland.

The protein localises to the secreted. Functionally, inhibits thrombin-induced fibrinogen clotting and factor Xa-induced prothrombin activation. Binds to thrombin and prothrombin exosites. This is Snaclec salmorin subunit A from Gloydius brevicauda (Korean slamosa snake).